The following is a 461-amino-acid chain: MIKVGILDSTLREGEQTPGVIFTVDQRVEIAKALSDLGVSMIEAGHPAVSPDIYEGIKRIVKLKKEGIITSEIVGHSRAVKRDIEIAAELEVDRIAIFYGVSDIHLKAKHKATREEALRVIAETISYARSHGVKVRFTAEDGSRTDFDFLVTVSRTARDAGADRVSIADTVGILYPSKTKELFSALIREVPNLEYDIHAHNDLGLAVANALAAVEGGATIVHATVNGLGERVGIVPLQQIVAAIKYHFGIEVVKLDKLQYVSSLIEKYSGIPMPPNYPITGDYAFLHKAGVHVAGVLSDPRTYEFMPPETFGRTRDYTIDKYTGKHALRDKYEKLGVKISEAEMDQILAKIKSNTTIRFYRDVDLLELAEEVTGRVLKPRPPEQIEALISVKCDSNVYTTSVTRRLSVINGVKEVMEISGDYDILVKVQAKDSNELNQIIESIRATKGVRSTLTSLVLKKM.

Residues 4 to 259 (VGILDSTLRE…IEVVKLDKLQ (256 aa)) form the Pyruvate carboxyltransferase domain. Arg-12 provides a ligand contact to 2-oxoglutarate. A Mg(2+)-binding site is contributed by Glu-13. 2-oxoglutarate is bound by residues His-76, Arg-136, and Thr-170. Residues His-198 and His-200 each contribute to the Mg(2+) site. Catalysis depends on His-292, which acts as the Proton acceptor.

The protein belongs to the alpha-IPM synthase/homocitrate synthase family. Homocitrate synthase LYS20/LYS21 subfamily. It depends on Mg(2+) as a cofactor. Requires Mn(2+) as cofactor.

It carries out the reaction acetyl-CoA + 2-oxoglutarate + H2O = (2R)-homocitrate + CoA + H(+). The protein operates within amino-acid biosynthesis; L-lysine biosynthesis via AAA pathway; L-alpha-aminoadipate from 2-oxoglutarate: step 1/5. Functionally, catalyzes the aldol-type condensation of 2-oxoglutarate with acetyl-CoA to yield homocitrate. Carries out the first step of the alpha-aminoadipate (AAA) lysine biosynthesis pathway. In Saccharolobus solfataricus (strain ATCC 35092 / DSM 1617 / JCM 11322 / P2) (Sulfolobus solfataricus), this protein is Homocitrate synthase.